An 82-amino-acid polypeptide reads, in one-letter code: uncharacterized protein (82 aa).

Residues 22-82 (LRRSRSSRNG…WPPPCAFTPG (61 aa)) form a disordered region. Over residues 47 to 58 (HRGEPGHPRMEE) the composition is skewed to basic and acidic residues. Positions 73 to 82 (WPPPCAFTPG) are enriched in pro residues.

This is an uncharacterized protein from Homo sapiens (Human).